Reading from the N-terminus, the 288-residue chain is Polyamine aminopropyltransferase (288 aa).

Residues 9–242 (SGWLDEYHQG…GLWSWAFASM (234 aa)) enclose the PABS domain. Q36 is a binding site for S-methyl-5'-thioadenosine. Residues H67 and D91 each contribute to the spermidine site. S-methyl-5'-thioadenosine contacts are provided by residues E111 and 143-144 (NG). The active-site Proton acceptor is D162. Position 169 (P169) interacts with S-methyl-5'-thioadenosine.

The protein belongs to the spermidine/spermine synthase family. As to quaternary structure, homodimer or homotetramer.

It localises to the cytoplasm. The enzyme catalyses S-adenosyl 3-(methylsulfanyl)propylamine + putrescine = S-methyl-5'-thioadenosine + spermidine + H(+). It functions in the pathway amine and polyamine biosynthesis; spermidine biosynthesis; spermidine from putrescine: step 1/1. Catalyzes the irreversible transfer of a propylamine group from the amino donor S-adenosylmethioninamine (decarboxy-AdoMet) to putrescine (1,4-diaminobutane) to yield spermidine. This chain is Polyamine aminopropyltransferase, found in Prochlorococcus marinus (strain NATL1A).